A 508-amino-acid polypeptide reads, in one-letter code: Photosystem II CP47 reaction center protein (508 aa).

The next 6 helical transmembrane spans lie at 21–36, 101–115, 140–156, 203–218, 237–252, and 457–472; these read SVHI…WAGS, IVFS…IWHW, GIHL…FGAF, IAAG…FHLS, VLSS…AFVV, and SFAL…HGSR.

It belongs to the PsbB/PsbC family. PsbB subfamily. As to quaternary structure, PSII is composed of 1 copy each of membrane proteins PsbA, PsbB, PsbC, PsbD, PsbE, PsbF, PsbH, PsbI, PsbJ, PsbK, PsbL, PsbM, PsbT, PsbX, PsbY, PsbZ, Psb30/Ycf12, at least 3 peripheral proteins of the oxygen-evolving complex and a large number of cofactors. It forms dimeric complexes. Requires Binds multiple chlorophylls. PSII binds additional chlorophylls, carotenoids and specific lipids. as cofactor.

The protein resides in the plastid. It localises to the chloroplast thylakoid membrane. In terms of biological role, one of the components of the core complex of photosystem II (PSII). It binds chlorophyll and helps catalyze the primary light-induced photochemical processes of PSII. PSII is a light-driven water:plastoquinone oxidoreductase, using light energy to abstract electrons from H(2)O, generating O(2) and a proton gradient subsequently used for ATP formation. This chain is Photosystem II CP47 reaction center protein, found in Draba nemorosa (Woodland whitlowgrass).